The sequence spans 435 residues: Transcription factor tau 55 kDa subunit (435 aa).

Positions 362 to 417 (GLLSPTEENETTNAGQSKGSSTANDPNIQIQEEDVGLPDSTNTSRDHTGDKEEVQS) are disordered. Position 365 is a phosphoserine (Ser365). Polar residues predominate over residues 372 to 391 (TTNAGQSKGSSTANDPNIQI). A compositionally biased stretch (basic and acidic residues) spans 405–417 (SRDHTGDKEEVQS).

As to quaternary structure, component of the TFIIIC complex composed of TFC1, TFC3, TFC4, TFC6, TFC7 and TFC8. The subunits are organized in two globular domains, tauA and tauB, connected by a proteolysis-sensitive and flexible linker.

The protein localises to the nucleus. TFIIIC mediates tRNA and 5S RNA gene activation by binding to intragenic promoter elements. Upstream of the transcription start site, TFIIIC assembles the initiation complex TFIIIB-TFIIIC-tDNA, which is sufficient for RNA polymerase III recruitment and function. Part of the tauA domain of TFIIIC that binds boxA DNA promoter sites of tRNA and similar genes. The polypeptide is Transcription factor tau 55 kDa subunit (TFC7) (Saccharomyces cerevisiae (strain ATCC 204508 / S288c) (Baker's yeast)).